A 189-amino-acid polypeptide reads, in one-letter code: UPF0688 protein C1orf174 homolog (189 aa).

A disordered region spans residues 53–137; it reads QMAGDGGEAK…TTDPSVFFDE (85 aa). 2 stretches are compositionally biased toward basic and acidic residues: residues 59–73 and 93–103; these read GEAK…HGEV and APGERRGKENS.

This sequence belongs to the UPF0688 family.

The protein localises to the nucleus. In Danio rerio (Zebrafish), this protein is UPF0688 protein C1orf174 homolog.